The chain runs to 586 residues: Asparagine synthetase [glutamine-hydrolyzing] (586 aa).

C2 serves as the catalytic For GATase activity. The Glutamine amidotransferase type-2 domain occupies 2-185; it reads CGILAVLGVV…PGHLYSSKTG (184 aa). L-glutamine-binding positions include 50–54, 75–77, and D98; these read RLAII and NGE. One can recognise an Asparagine synthetase domain in the interval 193 to 516; sequence PPWFSETVPS…PQDSARETVP (324 aa). ATP contacts are provided by residues L231, I267, and 341 to 342; that span reads SG.

The catalysed reaction is L-aspartate + L-glutamine + ATP + H2O = L-asparagine + L-glutamate + AMP + diphosphate + H(+). Its pathway is amino-acid biosynthesis; L-asparagine biosynthesis; L-asparagine from L-aspartate (L-Gln route): step 1/1. Essential for nitrogen assimilation, distribution and remobilization within the plant via the phloem. The polypeptide is Asparagine synthetase [glutamine-hydrolyzing] (ASN1) (Zea mays (Maize)).